The sequence spans 468 residues: Phosphatidylinositol-binding clathrin assembly protein LAP (468 aa).

Residues 16–158 (RHSLAGQGLA…LSYRAMAFDF (143 aa)) form the ENTH domain. The disordered stretch occupies residues 438–468 (NAGDGTAKYDGGAGSSPFDWGATDDDGGAAQ). The span at 459 to 468 (ATDDDGGAAQ) shows a compositional bias: acidic residues.

This sequence belongs to the PICALM/SNAP91 family. Binds clathrin and phosphatidylinositol 4,5-bisphosphate. As to expression, in embryos, expression is seen in central and peripheral nervous systems (brain and ventral nerve cord) and Garland cells. Coexpressed with clathrin at presynaptic boutons of neuromuscular junctions.

The protein localises to the membrane. Its subcellular location is the clathrin-coated pit. The protein resides in the golgi apparatus. It is found in the cytoplasmic vesicle. It localises to the clathrin-coated vesicle. In terms of biological role, assembly protein recruiting clathrin and adaptor protein complex 2 (AP2) to cell membranes at sites of coated-pit formation and clathrin-vesicle assembly. May be required to determine the amount of membrane to be recycled, possibly by regulating the size of the clathrin cage. Involved in AP2-dependent clathrin-mediated endocytosis at the neuromuscular junction. In Drosophila melanogaster (Fruit fly), this protein is Phosphatidylinositol-binding clathrin assembly protein LAP (lap).